A 170-amino-acid polypeptide reads, in one-letter code: Co-chaperone protein HscB homolog (170 aa).

Positions 5 to 79 constitute a J domain; the sequence is DHFSLFGLPA…RARYLCEQAG (75 aa).

It belongs to the HscB family. In terms of assembly, interacts with HscA and stimulates its ATPase activity.

In terms of biological role, co-chaperone involved in the maturation of iron-sulfur cluster-containing proteins. Seems to help targeting proteins to be folded toward HscA. This Bordetella petrii (strain ATCC BAA-461 / DSM 12804 / CCUG 43448) protein is Co-chaperone protein HscB homolog.